We begin with the raw amino-acid sequence, 576 residues long: Aspartate--tRNA ligase (576 aa).

Residue Glu-171 participates in L-aspartate binding. The segment at 195–198 (QLFK) is aspartate. Residue Arg-217 participates in L-aspartate binding. ATP-binding positions include 217-219 (RDE) and Gln-226. An L-aspartate-binding site is contributed by His-450. Residue Glu-484 participates in ATP binding. Arg-491 lines the L-aspartate pocket. 536–539 (GLDR) is a binding site for ATP.

Belongs to the class-II aminoacyl-tRNA synthetase family. Type 1 subfamily. In terms of assembly, homodimer.

It localises to the cytoplasm. It carries out the reaction tRNA(Asp) + L-aspartate + ATP = L-aspartyl-tRNA(Asp) + AMP + diphosphate. In terms of biological role, catalyzes the attachment of L-aspartate to tRNA(Asp) in a two-step reaction: L-aspartate is first activated by ATP to form Asp-AMP and then transferred to the acceptor end of tRNA(Asp). This is Aspartate--tRNA ligase from Buchnera aphidicola subsp. Baizongia pistaciae (strain Bp).